The following is a 630-amino-acid chain: Lysophospholipase 3 (630 aa).

The first 16 residues, 1 to 16, serve as a signal peptide directing secretion; it reads MKALLSLLTAVAVATA. One can recognise a PLA2c domain in the interval 39-587; sequence SCPATRPSIR…KEYCWNGTVD (549 aa). Residues Asn-56, Asn-95, Asn-164, Asn-220, Asn-283, Asn-351, Asn-390, Asn-443, Asn-456, Asn-462, Asn-493, Asn-514, Asn-542, Asn-566, and Asn-583 are each glycosylated (N-linked (GlcNAc...) asparagine). A lipid anchor (GPI-like-anchor amidated asparagine) is attached at Asn-606. A propeptide spans 607 to 630 (removed in mature form); that stretch reads AAYTQGVTWLVGILAVGVAMGMTA.

Belongs to the lysophospholipase family. Post-translationally, the GPI-like anchor contains a phosphoceramide lipid group.

The protein resides in the cell membrane. It carries out the reaction a 1-acyl-sn-glycero-3-phosphocholine + H2O = sn-glycerol 3-phosphocholine + a fatty acid + H(+). In terms of biological role, catalyzes the release of fatty acids from lysophospholipids. The sequence is that of Lysophospholipase 3 (plb3) from Aspergillus fumigatus (strain CBS 144.89 / FGSC A1163 / CEA10) (Neosartorya fumigata).